Consider the following 617-residue polypeptide: NADPH-dependent diflavin oxidoreductase 1 (617 aa).

One can recognise a Flavodoxin-like domain in the interval 3 to 147 (PMILYASETG…AFLPWLQQTL (145 aa)). Residues 9–14 (SETGNA), 56–59 (STHG), 94–103 (LGDSSYERFC), and E129 each bind FMN. The FAD-binding FR-type domain occupies 226 to 465 (DDWVWATLKK…HIASPTLFLP (240 aa)). FAD-binding positions include 404 to 407 (RQFS) and 438 to 441 (GLCS). NADP(+) is bound by residues T479, 534-535 (SR), and 540-544 (RIYVQ). W617 lines the FAD pocket.

Belongs to the NADPH-dependent diflavin oxidoreductase NDOR1 family. It in the N-terminal section; belongs to the flavodoxin family. The protein in the C-terminal section; belongs to the flavoprotein pyridine nucleotide cytochrome reductase family. As to quaternary structure, interacts with DRE2; as part of the cytosolic iron-sulfur (Fe-S) protein assembly (CIA) machinery. FAD serves as cofactor. The cofactor is FMN.

The protein localises to the cytoplasm. Its subcellular location is the mitochondrion. The catalysed reaction is 2 oxidized [2Fe-2S]-[protein] + NADPH = 2 reduced [2Fe-2S]-[protein] + NADP(+) + H(+). Its function is as follows. NADPH-dependent reductase which is a central component of the cytosolic iron-sulfur (Fe-S) protein assembly (CIA) machinery. Transfers electrons from NADPH via its FAD and FMN prosthetic groups to the [2Fe-2S] cluster of DRE2, another key component of the CIA machinery. In turn, this reduced cluster provides electrons for assembly of cytosolic iron-sulfur cluster proteins. Positively controls H(2)O(2)-induced cell death. This is NADPH-dependent diflavin oxidoreductase 1 from Cryptococcus neoformans var. neoformans serotype D (strain B-3501A) (Filobasidiella neoformans).